A 110-amino-acid polypeptide reads, in one-letter code: Parvalbumin alpha (110 aa).

The residue at position 2 (Ser-2) is an N-acetylserine. Residues Ser-2 and Ser-24 each carry the phosphoserine modification. EF-hand domains are found at residues 39 to 74 (KSADDVKKVFHILDKDKSGFIEEDELGFILKGFSPD) and 78 to 110 (LSAKETKTLMAAGDKDGDGKIGVDEFSTLVAES). Asp-52, Asp-54, Ser-56, Phe-58, Glu-60, Glu-63, Asp-91, Asp-93, Asp-95, Lys-97, and Glu-102 together coordinate Ca(2+).

Belongs to the parvalbumin family.

In terms of biological role, in muscle, parvalbumin is thought to be involved in relaxation after contraction. It binds two calcium ions. The protein is Parvalbumin alpha (PVALB) of Macaca fuscata fuscata (Japanese macaque).